A 51-amino-acid chain; its full sequence is Large ribosomal subunit protein eL39 (51 aa).

The protein belongs to the eukaryotic ribosomal protein eL39 family.

In Thermoplasma acidophilum (strain ATCC 25905 / DSM 1728 / JCM 9062 / NBRC 15155 / AMRC-C165), this protein is Large ribosomal subunit protein eL39 (rpl39e).